The primary structure comprises 88 residues: UPF0250 protein Sbal_3280 (88 aa).

This sequence belongs to the UPF0250 family.

The sequence is that of UPF0250 protein Sbal_3280 from Shewanella baltica (strain OS155 / ATCC BAA-1091).